A 182-amino-acid chain; its full sequence is Protein transport protein gos1 (182 aa).

The Cytoplasmic segment spans residues Met1–Asp163. The helical; Anchor for type IV membrane protein transmembrane segment at Ser164 to Phe181 threads the bilayer. A topological domain (vesicular) is located at residue His182.

The protein belongs to the GOSR1 family. Component of a SNARE complex consisting of sed5, gos1, ykt6, and sft1.

The protein localises to the golgi apparatus membrane. Nonessential SNARE involved in retrograde transport within the Golgi complex. In Schizosaccharomyces pombe (strain 972 / ATCC 24843) (Fission yeast), this protein is Protein transport protein gos1 (gos1).